A 794-amino-acid polypeptide reads, in one-letter code: Histone-lysine N-methyltransferase, H3 lysine-9 specific SUVH5 (794 aa).

Disordered stretches follow at residues 187 to 210 (VGRD…KRSI) and 254 to 276 (SPVK…KNSE). Over residues 194–203 (NMGSKFSKNG) the composition is skewed to polar residues. Residues 258–276 (PSEKRNGDYGEGSMRKNSE) show a composition bias toward basic and acidic residues. The region spanning 365–515 (GTVPGVEVGD…KLVFKFKLRR (151 aa)) is the YDG domain. In terms of domain architecture, Pre-SET spans 585–644 (KSCGCTNGCSKSKNCACIVKNGGKIPYYDGAIVEIKPLVYECGPHCKCPPSCNMRVSQHG). An SET domain is found at 647–764 (IKLEIFKTES…PLQELSYDYN (118 aa)). The Post-SET domain maps to 778 to 794 (KKKFCYCGSAECSGRLY).

This sequence belongs to the class V-like SAM-binding methyltransferase superfamily. Histone-lysine methyltransferase family. Suvar3-9 subfamily. Expressed in leaves stems and flowers.

It is found in the nucleus. The protein localises to the chromosome. It localises to the centromere. It carries out the reaction N(6)-methyl-L-lysyl(9)-[histone H3] + S-adenosyl-L-methionine = N(6),N(6)-dimethyl-L-lysyl(9)-[histone H3] + S-adenosyl-L-homocysteine + H(+). The enzyme catalyses L-lysyl(9)-[histone H3] + S-adenosyl-L-methionine = N(6)-methyl-L-lysyl(9)-[histone H3] + S-adenosyl-L-homocysteine + H(+). Its function is as follows. Histone methyltransferase. Methylates 'Lys-9' of histone H3. H3 'Lys-9' methylation represents a specific tag for epigenetic transcriptional repression. In Arabidopsis thaliana (Mouse-ear cress), this protein is Histone-lysine N-methyltransferase, H3 lysine-9 specific SUVH5 (SUVH5).